A 436-amino-acid polypeptide reads, in one-letter code: Trigger factor (436 aa).

Residues 161 to 246 (DDQLNIDFVG…VNSVSEPKLP (86 aa)) form the PPIase FKBP-type domain.

The protein belongs to the FKBP-type PPIase family. Tig subfamily.

The protein resides in the cytoplasm. The enzyme catalyses [protein]-peptidylproline (omega=180) = [protein]-peptidylproline (omega=0). Involved in protein export. Acts as a chaperone by maintaining the newly synthesized protein in an open conformation. Functions as a peptidyl-prolyl cis-trans isomerase. This Pseudomonas fluorescens (strain ATCC BAA-477 / NRRL B-23932 / Pf-5) protein is Trigger factor.